The primary structure comprises 320 residues: Phosphate acetyltransferase (320 aa).

It belongs to the phosphate acetyltransferase and butyryltransferase family.

It localises to the cytoplasm. The catalysed reaction is acetyl-CoA + phosphate = acetyl phosphate + CoA. It functions in the pathway metabolic intermediate biosynthesis; acetyl-CoA biosynthesis; acetyl-CoA from acetate: step 2/2. This Mycoplasma pneumoniae (strain ATCC 29342 / M129 / Subtype 1) (Mycoplasmoides pneumoniae) protein is Phosphate acetyltransferase (pta).